A 921-amino-acid chain; its full sequence is DNA mismatch repair protein MutS 1 (921 aa).

619 to 626 (GPNMSGKS) contacts ATP. Residues 837–887 (FRDGAAQSGGAAAGSTAEPVATDGDPEHAPGEAAAEGPKGDERAASLDSET) are disordered. Over residues 840–853 (GAAQSGGAAAGSTA) the composition is skewed to low complexity.

Belongs to the DNA mismatch repair MutS family.

In terms of biological role, this protein is involved in the repair of mismatches in DNA. It is possible that it carries out the mismatch recognition step. This protein has a weak ATPase activity. The protein is DNA mismatch repair protein MutS 1 of Haloarcula marismortui (strain ATCC 43049 / DSM 3752 / JCM 8966 / VKM B-1809) (Halobacterium marismortui).